Here is an 89-residue protein sequence, read N- to C-terminus: Small ribosomal subunit protein uS14A (89 aa).

This sequence belongs to the universal ribosomal protein uS14 family. As to quaternary structure, part of the 30S ribosomal subunit. Contacts proteins S3 and S10.

In terms of biological role, binds 16S rRNA, required for the assembly of 30S particles and may also be responsible for determining the conformation of the 16S rRNA at the A site. This is Small ribosomal subunit protein uS14A from Staphylococcus haemolyticus (strain JCSC1435).